Reading from the N-terminus, the 130-residue chain is Small ribosomal subunit protein uS9 (130 aa).

It belongs to the universal ribosomal protein uS9 family.

This chain is Small ribosomal subunit protein uS9, found in Variovorax paradoxus (strain S110).